A 947-amino-acid polypeptide reads, in one-letter code: ATP-dependent RNA helicase DDX42 (947 aa).

Gly residues predominate over residues 1–18 (MNWNKGGSGNKRGFGFGG). Disordered regions lie at residues 1 to 54 (MNWN…NQLP), 68 to 114 (EENS…PLEA), and 176 to 200 (NLEYDSDGNPIAPTTKRIIDPLPPI). The segment covering 34 to 54 (VSHSAFQSASSKYGSTSNQLP) has biased composition (polar residues). Positions 68-81 (EENSYFDDEEEDSS) are enriched in acidic residues. A coiled-coil region spans residues 112 to 152 (LEAFMAEVEDQAAKDMRKLEERDKEKANARGIRDDIEEEDD). The Q motif signature appears at 250–278 (SSFAHFGFDEQLLHQIRKSEYTQPTPIQC). Positions 281 to 456 (IPVALSGRDM…RDILVDPIRV (176 aa)) constitute a Helicase ATP-binding domain. Residue 294-301 (AKTGSGKT) participates in ATP binding. Positions 404–407 (DEAD) match the DEAD box motif. The 146-residue stretch at 484 to 629 (WLTRRLVEFT…YVSKELLDLA (146 aa)) folds into the Helicase C-terminal domain. Disordered stretches follow at residues 731–754 (SAGSLSSVPSAHPPSGKLPAEAAP) and 797–947 (GASA…RWDS). Residues 805–929 (GGRERHSDSK…RKEGTREAKT (125 aa)) are compositionally biased toward basic and acidic residues. Over residues 938 to 947 (PKRKKSRWDS) the composition is skewed to basic residues.

Belongs to the DEAD box helicase family. DDX42 subfamily. Transient component of the SF3B subcomplex of the 17S U2 SnRNP complex.

The protein localises to the cytoplasm. It localises to the nucleus. The catalysed reaction is ATP + H2O = ADP + phosphate + H(+). In terms of biological role, ATP-dependent RNA helicase that binds to partially double-stranded RNAs (dsRNAs) in order to unwind RNA secondary structures. Unwinding is promoted in the presence of single-strand binding proteins. Also mediates RNA duplex formation thereby displacing the single-strand RNA binding protein. ATP and ADP modulate its activity: ATP binding and hydrolysis by DDX42 triggers RNA strand separation, whereas the ADP-bound form of the protein triggers annealing of complementary RNA strands. Required for assembly of the 17S U2 SnRNP complex of the spliceosome, a large ribonucleoprotein complex that removes introns from transcribed pre-mRNAs: DDX42 associates transiently with the SF3B subcomplex of the 17S U2 SnRNP complex and is released after fulfilling its role in the assembly of 17S U2 SnRNP. In Xenopus laevis (African clawed frog), this protein is ATP-dependent RNA helicase DDX42 (ddx42).